A 316-amino-acid polypeptide reads, in one-letter code: MHSKDAVIAIYGPTASGKTALSLALCEQLDCEIISVDSALIYRGMDIGTAKPSAEEQNLVPHHLLDIRDPAETYSAADFQKDALALIDDIQQRGKVPLLVGGTMLYFKALLEGLSHLPESDTSVREKLTAELHEKGLAELHSRLQKVDPTSAKRIHPNDPQRILRALEVYEIAGKPLTELTRERHGQLTKPIYQFAVAPVERKVLHQRIEQRFDHMLAQPFKEEVATLFARPDLHPDLPSIRSVGYRQMWQHLAGELSYDEMRERGIIATRQLAKRQMTWLRGWPGVHWLETGDLNMQAKVMTAMQQPAKIFNSKD.

12-19 (GPTASGKT) contributes to the ATP binding site. 14–19 (TASGKT) is a substrate binding site. Interaction with substrate tRNA regions lie at residues 37–40 (DSAL) and 161–165 (QRILR).

This sequence belongs to the IPP transferase family. Monomer. Requires Mg(2+) as cofactor.

It carries out the reaction adenosine(37) in tRNA + dimethylallyl diphosphate = N(6)-dimethylallyladenosine(37) in tRNA + diphosphate. Functionally, catalyzes the transfer of a dimethylallyl group onto the adenine at position 37 in tRNAs that read codons beginning with uridine, leading to the formation of N6-(dimethylallyl)adenosine (i(6)A). This Idiomarina loihiensis (strain ATCC BAA-735 / DSM 15497 / L2-TR) protein is tRNA dimethylallyltransferase.